Here is a 91-residue protein sequence, read N- to C-terminus: PqqA binding protein 1 (91 aa).

Belongs to the PqqD family. In terms of assembly, monomer. Interacts with PqqE.

It participates in cofactor biosynthesis; pyrroloquinoline quinone biosynthesis. In terms of biological role, functions as a PqqA binding protein and presents PqqA to PqqE, in the pyrroloquinoline quinone (PQQ) biosynthetic pathway. The chain is PqqA binding protein 1 (pqqD1) from Pseudomonas putida (strain ATCC 47054 / DSM 6125 / CFBP 8728 / NCIMB 11950 / KT2440).